A 1162-amino-acid polypeptide reads, in one-letter code: Reticulon-4 (1162 aa).

At M1 the chain carries N-acetylmethionine. A disordered region spans residues 1 to 183 (MEDIDQSSLV…ALPAASEPVI (183 aa)). Residues 1–988 (MEDIDQSSLV…LYWRDIKKTG (988 aa)) are Cytoplasmic-facing. S7 and S16 each carry phosphoserine. Low complexity predominate over residues 7–16 (SSLVSSSADS). Over residues 31–54 (EPEDEEDEEDEEEEEDDEDLEELE) the composition is skewed to acidic residues. Pro residues predominate over residues 85–99 (PPAPRGPLPAAPPTA). The residue at position 105 (S105) is a Phosphoserine. Low complexity predominate over residues 109-127 (SPAASAPSLPPAAAVLPSK). S145, S165, S167, S329, and S344 each carry phosphoserine. The residue at position 348 (T348) is a Phosphothreonine. Over residues 408–422 (SLEQKGHGKDSESRN) the composition is skewed to basic and acidic residues. The interval 408 to 432 (SLEQKGHGKDSESRNENASFPRTPE) is disordered. S426 bears the Phosphoserine mark. The residue at position 430 (T430) is a Phosphothreonine. A phosphoserine mark is found at S489, S690, S727, S768, and S832. Residues 711-730 (ELVDDSSPESEPVDLFSDDS) form a disordered region. Residues 713–730 (VDDSSPESEPVDLFSDDS) are compositionally biased toward acidic residues. Residue T834 is modified to Phosphothreonine. Phosphoserine is present on residues S857 and S961. Residues 975–1162 (VVDLLYWRDI…KIPGLKRKAE (188 aa)) form the Reticulon domain. Residues 989 to 1009 (VVFGASLFLLLSLTVFSIVSV) form a helical membrane-spanning segment. Over 1010–1078 (TAYIALALLS…VNSTIKELRR (69 aa)) the chain is Lumenal. An N6-acetyllysine modification is found at K1074. The chain crosses the membrane as a helical span at residues 1079-1099 (LFLVDDLVDSLKFAVLMWVFT). At 1100 to 1162 (YVGALFNGLT…KIPGLKRKAE (63 aa)) the chain is on the cytoplasmic side.

Binds to RTN4R. Interacts with ATL1. Interacts with TMEM170A. Interacts with RTN4IP1. In terms of assembly, interacts in trans with CNTNAP1. Interacts with REEP5. Interacts with GPR50. Interacts with synaptic plasticity regulator PANTS; the interaction results in enhanced RTN4-mediated inhibition of AMPA receptor clustering. As to quaternary structure, homodimer. Interacts with BAD/Bcl-xl and BCL2. Interact with RTN3. Interacts with NGBR. Interacts with SPTLC1. Interacts with GRAMD4. Interacts with CDH5. Interacts with BACE1 and BACE2. Interacts with REEP5. Interacts with RETREG3. Interacts with BACE1 and BACE2. Interacts with TMEM33. As to expression, expressed in cardiomyocytes (at protein level). Highly expressed in brain but not deteceted in aorta, femoral and carotid arteries. Main isoform expressed in neurons. Expressed in cardiomyocytes (at protein level). Expressed in splenocytes, T-cells, B-cells, bone marrow derived dendritic cells and macrophages (at protein level). Expressed in neurons. Highly expressed in endothelial cells and vascular smooth muscle cells, including blood vessels and mesenteric arteries. Expressed in bronchial and alveolar epithelial cells as well as vascular endothelial cells of lungs. In terms of tissue distribution, expressed in B-cells, bone marrow dendritic cells and macrophages (at protein level). As to expression, expressed in cardiomyocytes. Expressed at very low levels in neurons.

The protein resides in the endoplasmic reticulum membrane. It is found in the cell membrane. It localises to the synapse. The protein localises to the cell junction. Required to induce the formation and stabilization of endoplasmic reticulum (ER) tubules. They regulate membrane morphogenesis in the ER by promoting tubular ER production. They influence nuclear envelope expansion, nuclear pore complex formation and proper localization of inner nuclear membrane proteins. However each isoform have specific functions mainly depending on their tissue expression specificities. In terms of biological role, developmental neurite growth regulatory factor with a role as a negative regulator of axon-axon adhesion and growth, and as a facilitator of neurite branching. Regulates neurite fasciculation, branching and extension in the developing nervous system. Involved in down-regulation of growth, stabilization of wiring and restriction of plasticity in the adult CNS. Regulates the radial migration of cortical neurons via an RTN4R-LINGO1 containing receptor complex. Acts as a negative regulator of central nervous system angiogenesis. Inhibits spreading, migration and sprouting of primary brain microvascular endothelial cells (MVECs). Also induces the retraction of MVECs lamellipodia and filopodia in a ROCK pathway-dependent manner. Functionally, mainly function in endothelial cells and vascular smooth muscle cells, is also involved in immune system regulation. Modulator of vascular remodeling, promotes the migration of endothelial cells but inhibits the migration of vascular smooth muscle cells. Regulates endothelial sphingolipid biosynthesis with direct effects on vascular function and blood pressure. Inhibits serine palmitoyltransferase, SPTLC1, the rate-limiting enzyme of the novo sphingolipid biosynthetic pathway, thereby controlling production of endothelial sphingosine-1-phosphate (S1P). Required to promote macrophage homing and functions such as cytokine/chemokine gene expression involved in angiogenesis, arteriogenesis and tissue repair. Mediates ICAM1 induced transendothelial migration of leukocytes such as monocytes and neutrophils and acute inflammation. Necessary for immune responses triggered by nucleic acid sensing TLRs, such as TLR9, is required for proper TLR9 location to endolysosomes. Also involved in immune response to LPS. Plays a role in liver regeneration through the modulation of hepatocytes proliferation. Reduces the anti-apoptotic activity of Bcl-xl and Bcl-2. This is likely consecutive to their change in subcellular location, from the mitochondria to the endoplasmic reticulum, after binding and sequestration. With isoform C, inhibits BACE1 activity and amyloid precursor protein processing. Its function is as follows. Regulates cardiomyocyte apoptosis upon hypoxic conditions. With isoform B, inhibits BACE1 activity and amyloid precursor protein processing. This Mus musculus (Mouse) protein is Reticulon-4.